A 203-amino-acid polypeptide reads, in one-letter code: Ras-like protein family member 10A (203 aa).

The segment at 1-203 (MGGSLRVAVL…ALHPARCSLM (203 aa)) is small GTPase-like. 11-18 (GAPGVGKT) is a binding site for GTP. An Effector region motif is present at residues 33 to 42 (HRPTDSPCLY). GTP contacts are provided by residues 59–62 (DGDV) and 129–132 (NKRD). At cysteine 200 the chain carries Cysteine methyl ester. The S-farnesyl cysteine moiety is linked to residue cysteine 200. Residues 201–203 (SLM) constitute a propeptide, removed in mature form.

This sequence belongs to the small GTPase superfamily. Ras family. Isoprenylation is essential for nucleolar localization, and the proliferation-inhibiting activity of RASL10A.

The protein resides in the cell membrane. It is found in the nucleus. It localises to the nucleolus. It carries out the reaction GTP + H2O = GDP + phosphate + H(+). Its function is as follows. Potent inhibitor of cellular proliferation. In Mus musculus (Mouse), this protein is Ras-like protein family member 10A (Rasl10a).